Reading from the N-terminus, the 177-residue chain is Transcription antitermination protein NusB (177 aa).

The interval methionine 1–arginine 35 is disordered. The span at proline 17–lysine 28 shows a compositional bias: low complexity.

This sequence belongs to the NusB family.

Its function is as follows. Involved in transcription antitermination. Required for transcription of ribosomal RNA (rRNA) genes. Binds specifically to the boxA antiterminator sequence of the ribosomal RNA (rrn) operons. This chain is Transcription antitermination protein NusB, found in Acidovorax sp. (strain JS42).